The chain runs to 46 residues: Photosystem II reaction center protein K (46 aa).

Positions 1–9 are excised as a propeptide; that stretch reads MLILFNTFA. A helical membrane pass occupies residues 25–45; sequence LPLIPLFFFLLVFVWQAAVGF.

The protein belongs to the PsbK family. PSII is composed of 1 copy each of membrane proteins PsbA, PsbB, PsbC, PsbD, PsbE, PsbF, PsbH, PsbI, PsbJ, PsbK, PsbL, PsbM, PsbT, PsbX, PsbY, Psb30/Ycf12, peripheral proteins PsbO, CyanoQ (PsbQ), PsbU, PsbV and a large number of cofactors. It forms dimeric complexes.

It localises to the cellular thylakoid membrane. Functionally, one of the components of the core complex of photosystem II (PSII). PSII is a light-driven water:plastoquinone oxidoreductase that uses light energy to abstract electrons from H(2)O, generating O(2) and a proton gradient subsequently used for ATP formation. It consists of a core antenna complex that captures photons, and an electron transfer chain that converts photonic excitation into a charge separation. The polypeptide is Photosystem II reaction center protein K (Prochlorococcus marinus (strain MIT 9301)).